Here is a 133-residue protein sequence, read N- to C-terminus: ATP synthase epsilon chain (133 aa).

This sequence belongs to the ATPase epsilon chain family. In terms of assembly, F-type ATPases have 2 components, CF(1) - the catalytic core - and CF(0) - the membrane proton channel. CF(1) has five subunits: alpha(3), beta(3), gamma(1), delta(1), epsilon(1). CF(0) has three main subunits: a, b and c.

It is found in the cell membrane. In terms of biological role, produces ATP from ADP in the presence of a proton gradient across the membrane. This chain is ATP synthase epsilon chain, found in Lawsonia intracellularis (strain PHE/MN1-00).